A 206-amino-acid polypeptide reads, in one-letter code: MSETGLTSSDFTEENEPFALFAEWLKDATASEINDPNAVALATVDENGLPNVRMVLLKGVDDRGFVFYTNFESQKGQEILGQKKAAMCFHWKSLRRQVRLRGEVEIVSDEEADAYYASRPRGSRIGAWASKQSRPLEGRFALEKAVAEYTARYAIGEIPRPSHWSGFRIRPVSIEFWHDRKFRLHDRIEFRRETPDGAWSKVRMYP.

Residues 53–58 (RMVLLK), 68–69 (YT), K75, and Q97 contribute to the FMN site. Substrate is bound at residue K58. Substrate-binding residues include Y115, R119, and S123. FMN is bound by residues 132–133 (QS) and W177. 183–185 (RLH) contributes to the substrate binding site. Residue R187 coordinates FMN.

This sequence belongs to the pyridoxamine 5'-phosphate oxidase family. As to quaternary structure, homodimer. The cofactor is FMN.

It catalyses the reaction pyridoxamine 5'-phosphate + O2 + H2O = pyridoxal 5'-phosphate + H2O2 + NH4(+). The catalysed reaction is pyridoxine 5'-phosphate + O2 = pyridoxal 5'-phosphate + H2O2. It functions in the pathway cofactor metabolism; pyridoxal 5'-phosphate salvage; pyridoxal 5'-phosphate from pyridoxamine 5'-phosphate: step 1/1. Its pathway is cofactor metabolism; pyridoxal 5'-phosphate salvage; pyridoxal 5'-phosphate from pyridoxine 5'-phosphate: step 1/1. Functionally, catalyzes the oxidation of either pyridoxine 5'-phosphate (PNP) or pyridoxamine 5'-phosphate (PMP) into pyridoxal 5'-phosphate (PLP). This is Pyridoxine/pyridoxamine 5'-phosphate oxidase from Agrobacterium fabrum (strain C58 / ATCC 33970) (Agrobacterium tumefaciens (strain C58)).